We begin with the raw amino-acid sequence, 263 residues long: Endonuclease 8 (263 aa).

The active-site Schiff-base intermediate with DNA is the P2. E3 functions as the Proton donor in the catalytic mechanism. K53 (proton donor; for beta-elimination activity) is an active-site residue. Residues Q70, R125, and N169 each contribute to the DNA site. An FPG-type zinc finger spans residues 229–263; the sequence is KVFHREGESCERCGGTIERTMLSSRPFYWCPHCQS. R253 acts as the Proton donor; for delta-elimination activity in catalysis.

Belongs to the FPG family. Zn(2+) is required as a cofactor.

The catalysed reaction is 2'-deoxyribonucleotide-(2'-deoxyribose 5'-phosphate)-2'-deoxyribonucleotide-DNA = a 3'-end 2'-deoxyribonucleotide-(2,3-dehydro-2,3-deoxyribose 5'-phosphate)-DNA + a 5'-end 5'-phospho-2'-deoxyribonucleoside-DNA + H(+). Involved in base excision repair of DNA damaged by oxidation or by mutagenic agents. Acts as a DNA glycosylase that recognizes and removes damaged bases. Has a preference for oxidized pyrimidines, such as thymine glycol, 5,6-dihydrouracil and 5,6-dihydrothymine. Has AP (apurinic/apyrimidinic) lyase activity and introduces nicks in the DNA strand. Cleaves the DNA backbone by beta-delta elimination to generate a single-strand break at the site of the removed base with both 3'- and 5'-phosphates. This chain is Endonuclease 8, found in Pectobacterium atrosepticum (strain SCRI 1043 / ATCC BAA-672) (Erwinia carotovora subsp. atroseptica).